Reading from the N-terminus, the 726-residue chain is Uracil catabolism protein 2 (726 aa).

A DNA-binding region (zn(2)-C6 fungal-type) is located at residues 24-53 (CGVCRKFKTRCDFEPLVGKCHRCNVLRLEC). 2 disordered regions span residues 152–183 (AGMG…FVNG) and 629–681 (SGRL…SGAD). Positions 161–170 (YDDDDDGDDD) are enriched in acidic residues. Residues 640-679 (RGSPSMTPGFQQSVQSSSALQGSKAGSPQSARSVNSQGSG) are compositionally biased toward polar residues.

The protein belongs to the URC2 family.

Its subcellular location is the nucleus. In terms of biological role, probable transcriptional activator involved in uracil catabolism. The polypeptide is Uracil catabolism protein 2 (URC2) (Lachancea kluyveri (Yeast)).